Here is a 679-residue protein sequence, read N- to C-terminus: Stress-70 protein, mitochondrial (679 aa).

The transit peptide at 1–46 (MISASRAVAARLVGAAASRGPTAARHQDGWNGLSHEAFRIVSRRDY) directs the protein to the mitochondrion. The segment at 1 to 432 (MISASRAVAA…IQGGVLAGDV (432 aa)) is interaction with NFS1. Thr63 and Asn64 together coordinate ADP. The nucleotide-binding domain (NBD) stretch occupies residues 63–431 (TNSCVAVMEG…AIQGGVLAGD (369 aa)). Residue Lys76 is modified to N6-acetyllysine. The residue at position 87 (Thr87) is a Phosphothreonine. Lys135 and Lys138 each carry N6-acetyllysine; alternate. N6-succinyllysine; alternate is present on residues Lys135 and Lys138. Position 143 is an N6-acetyllysine (Lys143). Lys206 carries the N6-acetyllysine; alternate modification. Lys206 carries the post-translational modification N6-succinyllysine; alternate. N6-malonyllysine; alternate is present on Lys206. Lys234 and Lys288 each carry N6-acetyllysine. Lys300 is modified (N6-acetyllysine; alternate). Lys300 is subject to N6-succinyllysine; alternate. ADP contacts are provided by Glu313, Lys316, and Ser320. Position 368 is an N6-succinyllysine (Lys368). Gly388 and Arg391 together coordinate ADP. Position 394 is an N6-succinyllysine (Lys394). Ser408 is modified (phosphoserine). Residues 432 to 441 (VTDVLLLDVT) form an interdomain linker region. The interval 432 to 679 (VTDVLLLDVT…QKEDQKEEKQ (248 aa)) is interaction with FXN and ISCU. The tract at residues 442–679 (PLSLGIETLG…QKEDQKEEKQ (238 aa)) is substrate-binding domain (SBD). Residue Arg513 is modified to Omega-N-methylarginine. 2 positions are modified to N6-acetyllysine; alternate: Lys567 and Lys600. Lys567 and Lys600 each carry N6-succinyllysine; alternate. An N6-succinyllysine modification is found at Lys610. Lys612 is subject to N6-acetyllysine. An N6-acetyllysine; alternate modification is found at Lys646. Lys646 is modified (N6-succinyllysine; alternate). A disordered region spans residues 656-679 (ASEREGSGSSGTGEQKEDQKEEKQ). Over residues 669-679 (EQKEDQKEEKQ) the composition is skewed to basic and acidic residues.

The protein belongs to the heat shock protein 70 family. Interacts strongly with the intermediate form of FXN and weakly with its mature form. Interacts with HSCB. Associates with the mitochondrial contact site and cristae organizing system (MICOS) complex, composed of at least MICOS10/MIC10, CHCHD3/MIC19, CHCHD6/MIC25, APOOL/MIC27, IMMT/MIC60, APOO/MIC23/MIC26 and QIL1/MIC13. This complex was also known under the names MINOS or MitOS complex. The MICOS complex associates with mitochondrial outer membrane proteins SAMM50, MTX1, MTX2 and DNAJC11, mitochondrial inner membrane protein TMEM11 and with HSPA9. Interacts with DNLZ, the interaction is required to prevent self-aggregation. Interacts with TESPA1. Interacts with PDPN. Interacts with NFU1, NFS1 and ISCU. Interacts with TP53; the interaction promotes TP53 degradation. Interacts (via SBD domain) with UBXN2A; the interaction with UBXN2A inhibits HSPA9/MOT-2 interaction with and degradation of TP53, thereby promotes TP53 translocation to the nucleus. Interacts with ITPR1 AND VDAC1; this interaction couples ITPR1 to VDAC1. Component of the TIM23 mitochondrial inner membrane pre-sequence translocase complex.

It is found in the mitochondrion. The protein localises to the nucleus. It localises to the nucleolus. Its subcellular location is the cytoplasm. The protein resides in the mitochondrion matrix. The enzyme catalyses ATP + H2O = ADP + phosphate + H(+). The chaperone activity is regulated by ATP-induced allosteric coupling of the nucleotide-binding (NBD) and substrate-binding (SBD) domains. ATP binding in the nucleotide-binding pocket (NBP) leads to a conformational change in the NBD, which is transferred through the interdomain linker (IDL) to the substrate-binding domain (SBD). This elicits a reduced substrate affinity and a faster substrate exchange rate. Upon hydrolysis of ATP to ADP, the protein undergoes a conformational change that increases its affinity for substrate proteins. It cycles through repeated phases of ATP hydrolysis and nucleotide exchange, facilitating repeated cycles of substrate binding and release. Functions in collaboration with co-chaperones. Functions with the co-chaperone, DNLZ, to maintain solubility and regulate ATP hydrolysis. Nucleotide exchange factors, GRPEL1 and GRPEL2, accelerate nucleotide exchange. Its function is as follows. Mitochondrial chaperone that plays a key role in mitochondrial protein import, folding, and assembly. Plays an essential role in the protein quality control system, the correct folding of proteins, the re-folding of misfolded proteins, and the targeting of proteins for subsequent degradation. These processes are achieved through cycles of ATP binding, ATP hydrolysis, and ADP release, mediated by co-chaperones. In mitochondria, it associates with the TIM (translocase of the inner membrane) protein complex to assist in the import and folding of mitochondrial proteins. Plays an important role in mitochondrial iron-sulfur cluster (ISC) biogenesis, interacts with and stabilizes ISC cluster assembly proteins FXN, NFU1, NFS1 and ISCU. Regulates erythropoiesis via stabilization of ISC assembly. Regulates mitochondrial calcium-dependent apoptosis by coupling two calcium channels, ITPR1 and VDAC1, at the mitochondria-associated endoplasmic reticulum (ER) membrane to facilitate calcium transport from the ER lumen to the mitochondria intermembrane space, providing calcium for the downstream calcium channel MCU, which releases it into the mitochondrial matrix. Although primarily located in the mitochondria, it is also found in other cellular compartments. In the cytosol, it associates with proteins involved in signaling, apoptosis, or senescence. It may play a role in cell cycle regulation via its interaction with and promotion of degradation of TP53. May play a role in the control of cell proliferation and cellular aging. Protects against reactive oxygen species (ROS). Extracellular HSPA9 plays a cytoprotective role by preventing cell lysis following immune attack by the membrane attack complex by disrupting formation of the complex. This chain is Stress-70 protein, mitochondrial, found in Pongo abelii (Sumatran orangutan).